The chain runs to 218 residues: Probable cutinase 3 (218 aa).

Positions Met-1–Ala-17 are cleaved as a signal peptide. 2 disulfide bridges follow: Cys-41–Cys-120 and Cys-67–Cys-81. Ser-131 (nucleophile) is an active-site residue. Cys-182 and Cys-189 are oxidised to a cystine. Asp-186 is a catalytic residue. The active-site Proton donor/acceptor is the His-199.

Belongs to the cutinase family.

The protein resides in the secreted. It catalyses the reaction cutin + H2O = cutin monomers.. Its function is as follows. Catalyzes the hydrolysis of complex carboxylic polyesters found in the cell wall of plants. Degrades cutin, a macromolecule that forms the structure of the plant cuticle. The chain is Probable cutinase 3 from Aspergillus terreus (strain NIH 2624 / FGSC A1156).